The sequence spans 539 residues: Serine/threonine-protein kinase 35 (539 aa).

The interval 103 to 161 is disordered; it reads ITIQGPAPPHLGARRRDEARGARAAPLLLPPPPAAMETGKENGARRGTKSPERKRRSPV. A compositionally biased stretch (basic residues) spans 148-160; sequence RGTKSPERKRRSP. The region spanning 207–535 is the Protein kinase domain; it reads YSLLAEIGRG…FELETRMDQV (329 aa). Residues 213–221 and Lys236 each bind ATP; that span reads IGRGSYGVV. Residue Asp365 is the Proton acceptor of the active site.

Belongs to the protein kinase superfamily. Ser/Thr protein kinase family. Interacts with PDLIM1/CLP-36. Autophosphorylated.

It localises to the nucleus. It is found in the nucleolus. The protein resides in the cytoplasm. The catalysed reaction is L-seryl-[protein] + ATP = O-phospho-L-seryl-[protein] + ADP + H(+). It catalyses the reaction L-threonyl-[protein] + ATP = O-phospho-L-threonyl-[protein] + ADP + H(+). The protein is Serine/threonine-protein kinase 35 (Stk35) of Mus musculus (Mouse).